The primary structure comprises 403 residues: Phosphopentomutase (403 aa).

The Mn(2+) site is built by Asp-13, Asp-298, His-303, Asp-339, His-340, and His-351.

The protein belongs to the phosphopentomutase family. It depends on Mn(2+) as a cofactor.

It localises to the cytoplasm. It carries out the reaction 2-deoxy-alpha-D-ribose 1-phosphate = 2-deoxy-D-ribose 5-phosphate. The enzyme catalyses alpha-D-ribose 1-phosphate = D-ribose 5-phosphate. The protein operates within carbohydrate degradation; 2-deoxy-D-ribose 1-phosphate degradation; D-glyceraldehyde 3-phosphate and acetaldehyde from 2-deoxy-alpha-D-ribose 1-phosphate: step 1/2. Its function is as follows. Isomerase that catalyzes the conversion of deoxy-ribose 1-phosphate (dRib-1-P) and ribose 1-phosphate (Rib-1-P) to deoxy-ribose 5-phosphate (dRib-5-P) and ribose 5-phosphate (Rib-5-P), respectively. The polypeptide is Phosphopentomutase (Streptococcus pneumoniae serotype 19F (strain G54)).